A 546-amino-acid chain; its full sequence is Nicotinic acid-CoA ligase olcI (546 aa).

Met194–Lys205 is a binding site for AMP. Positions Glu445 to Lys523 are AMP-binding.

The protein belongs to the ATP-dependent AMP-binding enzyme family.

It catalyses the reaction nicotinate + ATP + CoA = nicotinyl-CoA + AMP + diphosphate. It functions in the pathway secondary metabolite biosynthesis; terpenoid biosynthesis. Nicotinic acid-CoA ligase; part of the gene cluster that mediates the biosynthesis of 15-deoxyoxalicine B. The first step of the pathway is the synthesis of nicotinyl-CoA from nicotinic acid by the nicotinic acid-CoA ligase olcI. Nicotinyl-CoA is then a substrate of polyketide synthase olcA to produce 4-hydroxy-6-(3-pyridinyl)-2H-pyran-2-one (HPPO) which is further prenylated by the polyprenyl transferase olcH to yield geranylgeranyl-HPPO. Geranylgeranyl pyrophosphate is provided by the cluster-specific geranylgeranyl pyrophosphate synthase olcC. The FAD-dependent monooxygenase olcE catalyzes the epoxidation of geranylgeranyl-HPPO and the terpene cyclase olcD catalyzes the cyclization of the terpenoid component, resulting in the formation of the tricyclic terpene moiety seen in predecaturin E. The cytochrome P450 monooxygenase then catalyzes the allylic oxidation of predecaturin E, which is followed by spirocylization with concomitant loss of one molecule of water to form decaturin E. Decaturin E is the substrate of the cytochrome P450 monooxygenase olcJ which hydroxylates it at the C-29 position to form decaturin F. The short-chain dehydrogenase/reductase olcF may catalyze the oxidation of decaturin F to generate the 29-hydroxyl-27-one intermediate, and subsequent hemiacetal formation probably leads to the formation of decaturin C. The dioxygenase olcK may be a peroxisomal enzyme that catalyzes the hydroxylation of decaturin C into decaturin A once decaturin C is shuttled into the peroxisome by the MFS transporter olcL. Finally the cytochrome P450 monooxygenase olcB catalyzes the oxidative rearrangement to yield 15-deoxyoxalicine B. In the absence of olcJ, decaturin E may be shunted to a pathway in which it is oxidized to a ketone, possibly by olcF, to form decaturin D, which undergoes further allylic oxidation to yield decaturin G. Moreover, in the absence of oclK or oclL, oclB can convert decaturin C into 15-deoxyoxalicine A. In Penicillium canescens, this protein is Nicotinic acid-CoA ligase olcI.